We begin with the raw amino-acid sequence, 306 residues long: Probable rRNA-processing protein EBP2 (306 aa).

An N-acetylmethionine modification is found at M1. Disordered stretches follow at residues 1-20 (MDTP…LASD), 75-103 (GPVP…DDFQ), and 150-169 (IRQK…KAKQ). The residue at position 3 (T3) is a Phosphothreonine. S7, S9, S11, and S13 each carry phosphoserine. Polar residues predominate over residues 81-90 (SETQPTPQNQ). The span at 91–103 (DQKKGVNPEDDFQ) shows a compositional bias: basic and acidic residues. K93 is covalently cross-linked (Glycyl lysine isopeptide (Lys-Gly) (interchain with G-Cter in SUMO2)). Positions 135 to 171 (DYFAEMAKSDQQMQKIRQKLQTKQAAMEKSEKAKQLR) form a coiled coil. Glycyl lysine isopeptide (Lys-Gly) (interchain with G-Cter in SUMO2) cross-links involve residues K179 and K218. The segment covering 213–224 (LEGDQKPVERSA) has biased composition (basic and acidic residues). A disordered region spans residues 213–306 (LEGDQKPVER…ARQKLKSKAR (94 aa)). A phosphoserine mark is found at S264 and S270. A compositionally biased stretch (basic residues) spans 274–306 (KVAHGKGSRRPGKKGANKRPGKRARQKLKSKAR).

Belongs to the EBP2 family. In terms of assembly, interacts with WDR46.

It localises to the nucleus. Its subcellular location is the nucleolus. Its function is as follows. Required for the processing of the 27S pre-rRNA. The chain is Probable rRNA-processing protein EBP2 (Ebna1bp2) from Mus musculus (Mouse).